We begin with the raw amino-acid sequence, 219 residues long: Uracil-DNA glycosylase (219 aa).

D61 serves as the catalytic Proton acceptor.

Belongs to the uracil-DNA glycosylase (UDG) superfamily. UNG family.

Its subcellular location is the cytoplasm. It carries out the reaction Hydrolyzes single-stranded DNA or mismatched double-stranded DNA and polynucleotides, releasing free uracil.. Functionally, excises uracil residues from the DNA which can arise as a result of misincorporation of dUMP residues by DNA polymerase or due to deamination of cytosine. This chain is Uracil-DNA glycosylase, found in Haemophilus influenzae (strain PittEE).